The sequence spans 555 residues: CTL-like protein DDB_G0274487 (555 aa).

A compositionally biased stretch (polar residues) spans 1-17 (MGIEDNSQQPNTGSPYG). A disordered region spans residues 1–101 (MGIEDNSQQP…NLNKANDRES (101 aa)). The span at 19-63 (SPPSQYNPYGQQPPQQQQYNPYGEQQQQPQQQQQYGYQPQFQPTY) shows a compositional bias: low complexity. The segment covering 79-90 (PFPPQQQQPPPI) has biased composition (pro residues). Residue Asn116 is glycosylated (N-linked (GlcNAc...) asparagine). Residues 138–158 (IWFSILFGLNFGLLIVVSASA) form a helical membrane-spanning segment. The N-linked (GlcNAc...) asparagine glycan is linked to Asn174. The next 10 helical transmembrane spans lie at 182–202 (FLFA…WAWL), 210–230 (ESLI…YCVF), 231–251 (FFVW…FFII), 284–304 (AGYV…SAFA), 313–333 (AIQT…FHVI), 340–360 (TVSG…VGMP), 372–392 (LTTS…IETL), 405–425 (VVVK…SSIV), 472–492 (IAIG…LISI), and 493–513 (PFDM…LVII).

Belongs to the CTL (choline transporter-like) family.

The protein resides in the membrane. The polypeptide is CTL-like protein DDB_G0274487 (Dictyostelium discoideum (Social amoeba)).